A 129-amino-acid polypeptide reads, in one-letter code: MASAAASAVSFARPVKAICVNSVSFSALRKDNVSFRLQPVPQRFSVCCAAKKETVEKVCDIVKSQLALSDDTEVSGSSTFADLGADSLDTVEIVMGLEEAFGISVEESSAQTIATVEDAANLIDSLVGK.

Residues Met-1–Ala-49 constitute a chloroplast transit peptide. In terms of domain architecture, Carrier spans Lys-52–Val-127. Position 87 is an O-(pantetheine 4'-phosphoryl)serine (Ser-87).

The protein belongs to the acyl carrier protein (ACP) family. In terms of processing, 4'-phosphopantetheine is transferred from CoA to a specific serine of apo-ACP by acpS. This modification is essential for activity because fatty acids are bound in thioester linkage to the sulfhydryl of the prosthetic group.

It localises to the plastid. The protein localises to the chloroplast. It functions in the pathway lipid metabolism; fatty acid biosynthesis. Its function is as follows. Carrier of the growing fatty acid chain in fatty acid biosynthesis. The chain is Acyl carrier protein 2, chloroplastic (ACL1.2) from Hordeum vulgare (Barley).